The chain runs to 461 residues: Carboxypeptidase Rv3627c (461 aa).

A signal peptide spans 1-28 (MGPTRWRKSTHVVVGAAVLAFVAVVVAA). Serine 114 serves as the catalytic Acyl-ester intermediate. Lysine 117 (proton acceptor) is an active-site residue. Serine 295 is an active-site residue.

Belongs to the peptidase S13 family.

Functionally, carboxypeptidase that cleaves terminal D-alanine from peptidoglycan in the mycobacterial cell wall. May cleave L-Lys-D-Ala and/or D-Ala-D-Ala peptide bonds. Exerts important effects on mycobacterial cell morphology and cell division. This chain is Carboxypeptidase Rv3627c, found in Mycobacterium tuberculosis (strain ATCC 25618 / H37Rv).